A 68-amino-acid chain; its full sequence is Cx9C motif-containing protein 4 (68 aa).

Positions 4–46 constitute a CHCH domain; the sequence is KDPCQKQACEIQKCLQANSYMESKCQAVIQELRKCCAQYPKGR. Short sequence motifs (cx9C motif) lie at residues 7–17 and 28–38; these read CQKQACEIQKC and CQAVIQELRKC. 3 disulfides stabilise this stretch: cysteine 7/cysteine 38, cysteine 17/cysteine 28, and cysteine 39/cysteine 50.

The protein belongs to the CMC4 family. In terms of tissue distribution, expressed in many tissues with a relatively high level in skeletal muscle.

It is found in the mitochondrion. In Homo sapiens (Human), this protein is Cx9C motif-containing protein 4 (CMC4).